The chain runs to 389 residues: Acetate kinase (389 aa).

Asn-9 is a Mg(2+) binding site. Lys-16 contributes to the ATP binding site. A substrate-binding site is contributed by Arg-77. The Proton donor/acceptor role is filled by Asp-134. Residues 194–198 (HLGNG), 268–270 (DFR), and 316–320 (GVGEN) contribute to the ATP site. Residue Glu-370 coordinates Mg(2+).

Belongs to the acetokinase family. Homodimer. Mg(2+) is required as a cofactor. Mn(2+) serves as cofactor.

The protein resides in the cytoplasm. The enzyme catalyses acetate + ATP = acetyl phosphate + ADP. It functions in the pathway metabolic intermediate biosynthesis; acetyl-CoA biosynthesis; acetyl-CoA from acetate: step 1/2. Catalyzes the formation of acetyl phosphate from acetate and ATP. Can also catalyze the reverse reaction. In Mycolicibacterium vanbaalenii (strain DSM 7251 / JCM 13017 / BCRC 16820 / KCTC 9966 / NRRL B-24157 / PYR-1) (Mycobacterium vanbaalenii), this protein is Acetate kinase.